The primary structure comprises 436 residues: Xylose isomerase (436 aa).

Residues His100 and Asp103 contribute to the active site. Mg(2+) is bound by residues Glu231, Glu267, His270, Asp295, Asp306, Asp308, and Asp338.

Belongs to the xylose isomerase family. As to quaternary structure, homotetramer. Mg(2+) is required as a cofactor.

It localises to the cytoplasm. The enzyme catalyses alpha-D-xylose = alpha-D-xylulofuranose. This Ruegeria sp. (strain TM1040) (Silicibacter sp.) protein is Xylose isomerase.